We begin with the raw amino-acid sequence, 169 residues long: Protein-export protein SecB (169 aa).

This sequence belongs to the SecB family. As to quaternary structure, homotetramer, a dimer of dimers. One homotetramer interacts with 1 SecA dimer.

It is found in the cytoplasm. One of the proteins required for the normal export of preproteins out of the cell cytoplasm. It is a molecular chaperone that binds to a subset of precursor proteins, maintaining them in a translocation-competent state. It also specifically binds to its receptor SecA. The polypeptide is Protein-export protein SecB (Haemophilus influenzae (strain 86-028NP)).